A 447-amino-acid polypeptide reads, in one-letter code: Maltoporin (447 aa).

Residues 1–26 form the signal peptide; the sequence is MELRMKKVSVIAAAVAATLAAGSAFA.

Belongs to the porin LamB (TC 1.B.3) family. As to quaternary structure, homotrimer formed of three 18-stranded antiparallel beta-barrels, containing three independent channels.

It is found in the cell outer membrane. It catalyses the reaction beta-maltose(in) = beta-maltose(out). Involved in the transport of maltose and maltodextrins. The sequence is that of Maltoporin from Vibrio campbellii (strain ATCC BAA-1116).